Here is a 494-residue protein sequence, read N- to C-terminus: Poly(3-hydroxybutyrate) depolymerase (494 aa).

The N-terminal stretch at 1–25 is a signal peptide; that stretch reads MAFNFIRAAAAGAAMALCGVGSVHA. The active-site Nucleophile is Ser45. Catalysis depends on charge relay system residues Asp132 and His166. One can recognise a Fibronectin type-III domain in the interval 347-431; it reads APTGVSTSGA…AAASGTTLAA (85 aa).

Belongs to the AB hydrolase superfamily. Lipase family.

Its subcellular location is the secreted. It carries out the reaction [(3R)-hydroxybutanoate](n) + H2O = [(3R)-hydroxybutanoate](n-2) + (3R)-hydroxybutanoate dimer + H(+). The catalysed reaction is [(3R)-hydroxybutanoate](n) + H2O = [(3R)-hydroxybutanoate](n-1) + (R)-3-hydroxybutanoate + H(+). It catalyses the reaction (3R)-hydroxybutanoate dimer + H2O = 2 (R)-3-hydroxybutanoate + H(+). Catalyzes the hydrolysis of poly(3-hydroxybutyrate) (PHB) film, producing the monomer and dimer of 3-hydroxybutyrate (3HB), while the 3HB trimer and tetramer are not formed. The polypeptide is Poly(3-hydroxybutyrate) depolymerase (Delftia acidovorans (Pseudomonas acidovorans)).